The primary structure comprises 670 residues: Alpha-1,4-glucan:maltose-1-phosphate maltosyltransferase (670 aa).

Alpha-maltose 1-phosphate-binding residues include Lys262, Gln322, and Asp357. The Nucleophile role is filled by Asp393. Residue Asn394 coordinates alpha-maltose 1-phosphate. Glu422 serves as the catalytic Proton donor. Residue 534–535 coordinates alpha-maltose 1-phosphate; it reads KY.

It belongs to the glycosyl hydrolase 13 family. GlgE subfamily. As to quaternary structure, homodimer.

It catalyses the reaction alpha-maltose 1-phosphate + [(1-&gt;4)-alpha-D-glucosyl](n) = [(1-&gt;4)-alpha-D-glucosyl](n+2) + phosphate. Its function is as follows. Maltosyltransferase that uses maltose 1-phosphate (M1P) as the sugar donor to elongate linear or branched alpha-(1-&gt;4)-glucans. Is involved in a branched alpha-glucan biosynthetic pathway from trehalose, together with TreS, Mak and GlgB. This Chlorobaculum tepidum (strain ATCC 49652 / DSM 12025 / NBRC 103806 / TLS) (Chlorobium tepidum) protein is Alpha-1,4-glucan:maltose-1-phosphate maltosyltransferase.